The primary structure comprises 226 residues: Deoxyribose-phosphate aldolase (226 aa).

Glu96 acts as the Proton donor/acceptor in catalysis. Lys157 serves as the catalytic Schiff-base intermediate with acetaldehyde. The Proton donor/acceptor role is filled by Lys185.

The protein belongs to the DeoC/FbaB aldolase family. DeoC type 1 subfamily.

It is found in the cytoplasm. It catalyses the reaction 2-deoxy-D-ribose 5-phosphate = D-glyceraldehyde 3-phosphate + acetaldehyde. It functions in the pathway carbohydrate degradation; 2-deoxy-D-ribose 1-phosphate degradation; D-glyceraldehyde 3-phosphate and acetaldehyde from 2-deoxy-alpha-D-ribose 1-phosphate: step 2/2. In terms of biological role, catalyzes a reversible aldol reaction between acetaldehyde and D-glyceraldehyde 3-phosphate to generate 2-deoxy-D-ribose 5-phosphate. This is Deoxyribose-phosphate aldolase from Gloeobacter violaceus (strain ATCC 29082 / PCC 7421).